Reading from the N-terminus, the 113-residue chain is Class I hydrophobin POH1 (113 aa).

Positions 1 to 26 are cleaved as a signal peptide; that stretch reads MFSIRISTVVLAASALLAVAIPMTNT. 4 disulfide bridges follow: cysteine 31/cysteine 93, cysteine 38/cysteine 87, cysteine 39/cysteine 74, and cysteine 94/cysteine 107.

The protein belongs to the fungal hydrophobin family. In terms of assembly, self-assembles to form functional amyloid fibrils called rodlets. Self-assembly into fibrillar rodlets occurs spontaneously at hydrophobic:hydrophilic interfaces and the rodlets further associate laterally to form amphipathic monolayers. In terms of tissue distribution, expressed in the fruiting bodies but not in vegetative mycelium.

Its subcellular location is the secreted. It localises to the cell wall. Functionally, aerial growth, conidiation, and dispersal of filamentous fungi in the environment rely upon a capability of their secreting small amphipathic proteins called hydrophobins (HPBs) with low sequence identity. Class I can self-assemble into an outermost layer of rodlet bundles on aerial cell surfaces, conferring cellular hydrophobicity that supports fungal growth, development and dispersal; whereas Class II form highly ordered films at water-air interfaces through intermolecular interactions but contribute nothing to the rodlet structure. POH1 is a class I hydrophobin that is involved in the formation of mycelium knots and subsequent fruiting bodies. The sequence is that of Class I hydrophobin POH1 from Pleurotus ostreatus (Oyster mushroom).